Reading from the N-terminus, the 152-residue chain is Protein Smg homolog (152 aa).

This sequence belongs to the Smg family.

The protein is Protein Smg homolog of Bordetella petrii (strain ATCC BAA-461 / DSM 12804 / CCUG 43448).